A 209-amino-acid polypeptide reads, in one-letter code: A-type ATP synthase subunit D (209 aa).

The protein belongs to the V-ATPase D subunit family. As to quaternary structure, has multiple subunits with at least A(3), B(3), C, D, E, F, H, I and proteolipid K(x).

The protein resides in the cell membrane. Its function is as follows. Component of the A-type ATP synthase that produces ATP from ADP in the presence of a proton gradient across the membrane. The sequence is that of A-type ATP synthase subunit D from Thermoplasma volcanium (strain ATCC 51530 / DSM 4299 / JCM 9571 / NBRC 15438 / GSS1).